The sequence spans 248 residues: Large ribosomal subunit protein uL4 (248 aa).

Residues 45–105 (PYGADPYAGM…KDQSKSVNTK (61 aa)) are disordered. A compositionally biased stretch (basic and acidic residues) spans 92-105 (PKAEKDQSKSVNTK).

It belongs to the universal ribosomal protein uL4 family. In terms of assembly, part of the 50S ribosomal subunit.

Functionally, one of the primary rRNA binding proteins, this protein initially binds near the 5'-end of the 23S rRNA. It is important during the early stages of 50S assembly. It makes multiple contacts with different domains of the 23S rRNA in the assembled 50S subunit and ribosome. In terms of biological role, forms part of the polypeptide exit tunnel. The protein is Large ribosomal subunit protein uL4 of Haloquadratum walsbyi (strain DSM 16790 / HBSQ001).